A 390-amino-acid chain; its full sequence is Pyruvate dehydrogenase E1 component subunit alpha-1, mitochondrial (390 aa).

A mitochondrion-targeting transit peptide spans Met-1–Ala-15. Pyruvate-binding residues include His-91, Tyr-117, Arg-118, Gly-166, Val-168, Asp-197, Gly-198, Ala-199, Asn-226, and Tyr-228. Thiamine diphosphate is bound by residues Tyr-117, Arg-118, Gly-166, Val-168, Asp-197, Gly-198, Ala-199, and Asn-226. Asp-197 provides a ligand contact to Mg(2+). Positions 226 and 228 each coordinate Mg(2+). Position 292 (His-292) interacts with thiamine diphosphate. Residues Ser-293–Gln-312 form a disordered region. Over residues Arg-302–Gln-312 the composition is skewed to basic and acidic residues.

In terms of assembly, tetramer of 2 alpha and 2 beta subunits. Requires thiamine diphosphate as cofactor. Mg(2+) is required as a cofactor.

It is found in the mitochondrion matrix. It catalyses the reaction N(6)-[(R)-lipoyl]-L-lysyl-[protein] + pyruvate + H(+) = N(6)-[(R)-S(8)-acetyldihydrolipoyl]-L-lysyl-[protein] + CO2. Functionally, the pyruvate dehydrogenase complex catalyzes the overall conversion of pyruvate to acetyl-CoA and CO(2). It contains multiple copies of three enzymatic components: pyruvate dehydrogenase (E1), dihydrolipoamide acetyltransferase (E2) and lipoamide dehydrogenase (E3). The polypeptide is Pyruvate dehydrogenase E1 component subunit alpha-1, mitochondrial (Oryza sativa subsp. japonica (Rice)).